Reading from the N-terminus, the 87-residue chain is Mu-theraphotoxin-Hs1a (87 aa).

The signal sequence occupies residues 1 to 24 (MVNMKASMFLTFAGLVLLFVVCYA). Positions 25-52 (SESEEKEFPKEMLSSIFAVDNDFKQEER) are excised as a propeptide. 3 cysteine pairs are disulfide-bonded: Cys54/Cys67, Cys61/Cys72, and Cys66/Cys79.

It belongs to the neurotoxin 10 (Hwtx-1) family. 51 (Hntx-8) subfamily. Hntx-8 sub-subfamily. As to expression, expressed by the venom gland.

It is found in the secreted. In terms of biological role, probable sodium channel pore blocker that dose-dependently inhibits voltage-gated sodium channels (VGSC) on DUM neurons in a way similar to tetrodotoxin. Has no effect on the kinetics of activation and inactivation. Seems not to interact with VGSC in an inactivated state. In vivo, reversibly paralyzes cockroaches, and can enhance the muscular contraction elicited by stimulating its nerve. The sequence is that of Mu-theraphotoxin-Hs1a from Cyriopagopus schmidti (Chinese bird spider).